A 178-amino-acid polypeptide reads, in one-letter code: CASP-like protein 2U3 (178 aa).

At 1 to 4 the chain is on the cytoplasmic side; it reads MACR. The helical transmembrane segment at 5-25 threads the bilayer; it reads VMEVLLRVLAILLSIAGALVM. The Extracellular segment spans residues 26 to 52; the sequence is AKDKQDTFVMLGTVPVPLYARHSYVEA. Residues 53–73 form a helical membrane-spanning segment; it reads FVFLVYANGIVAIYCFIAVLL. Residues 74-80 are Cytoplasmic-facing; sequence SLLAKSR. A helical membrane pass occupies residues 81-101; sequence VLAGLLFFMDQALAYLLLAAA. The Extracellular segment spans residues 102-132; it reads AASTEVAYIAKRGEKKLVWGEVCSNFEHFCN. A helical transmembrane segment spans residues 133 to 153; that stretch reads LVGVSLVLTFLSVLVLVTLAI. The Cytoplasmic portion of the chain corresponds to 154–178; that stretch reads LSGKRLFGHPPLCAPPSTPPVHQGV.

Belongs to the Casparian strip membrane proteins (CASP) family. As to quaternary structure, homodimer and heterodimers.

Its subcellular location is the cell membrane. This chain is CASP-like protein 2U3, found in Pteridium aquilinum subsp. aquilinum (Bracken fern).